We begin with the raw amino-acid sequence, 113 residues long: MQAKAVVRTVRIAPRKVRLVVDLIRGKQVGEAIAILNHTPKTASPVVEKVLKSAIANAEHNYEMDINNLVVEKVFVDEGPTLKRFRPRAMGRASQINKRTSHITVVVSEKKEG.

This sequence belongs to the universal ribosomal protein uL22 family. As to quaternary structure, part of the 50S ribosomal subunit.

This protein binds specifically to 23S rRNA; its binding is stimulated by other ribosomal proteins, e.g. L4, L17, and L20. It is important during the early stages of 50S assembly. It makes multiple contacts with different domains of the 23S rRNA in the assembled 50S subunit and ribosome. Its function is as follows. The globular domain of the protein is located near the polypeptide exit tunnel on the outside of the subunit, while an extended beta-hairpin is found that lines the wall of the exit tunnel in the center of the 70S ribosome. This is Large ribosomal subunit protein uL22 from Bacillus mycoides (strain KBAB4) (Bacillus weihenstephanensis).